The primary structure comprises 427 residues: Enolase (427 aa).

Position 163 (Gln-163) interacts with (2R)-2-phosphoglycerate. Glu-205 serves as the catalytic Proton donor. Residues Asp-242, Glu-285, and Asp-312 each coordinate Mg(2+). Residues Lys-337, Arg-366, Ser-367, and Lys-388 each contribute to the (2R)-2-phosphoglycerate site. Lys-337 acts as the Proton acceptor in catalysis.

Belongs to the enolase family. The cofactor is Mg(2+).

It is found in the cytoplasm. Its subcellular location is the secreted. It localises to the cell surface. The enzyme catalyses (2R)-2-phosphoglycerate = phosphoenolpyruvate + H2O. Its pathway is carbohydrate degradation; glycolysis; pyruvate from D-glyceraldehyde 3-phosphate: step 4/5. In terms of biological role, catalyzes the reversible conversion of 2-phosphoglycerate (2-PG) into phosphoenolpyruvate (PEP). It is essential for the degradation of carbohydrates via glycolysis. This chain is Enolase, found in Burkholderia vietnamiensis (strain G4 / LMG 22486) (Burkholderia cepacia (strain R1808)).